A 305-amino-acid chain; its full sequence is Glutaminase (305 aa).

Positions 61, 113, 158, 165, 189, 241, and 259 each coordinate substrate.

It belongs to the glutaminase family. Homotetramer.

It carries out the reaction L-glutamine + H2O = L-glutamate + NH4(+). The protein is Glutaminase of Alkaliphilus metalliredigens (strain QYMF).